The sequence spans 551 residues: L-lactate permease (551 aa).

The next 13 membrane-spanning stretches (helical) occupy residues 13 to 33, 37 to 57, 69 to 89, 131 to 151, 159 to 179, 194 to 214, 220 to 240, 244 to 264, 366 to 386, 405 to 425, 438 to 458, 494 to 514, and 530 to 550; these read NIWL…FALI, LKGY…ALLF, VVYG…AAVF, GAAG…GLGF, LCLI…PILV, MVGR…MAIM, IKET…AQYL, FIGP…CLTL, FDWF…SIVW, LALP…SNYS, TGHA…FLTG, VTGK…VGLV, and IFTC…TWMI.

Belongs to the lactate permease family.

It localises to the cell inner membrane. It catalyses the reaction (S)-lactate(in) + H(+)(in) = (S)-lactate(out) + H(+)(out). It carries out the reaction (R)-lactate(in) + H(+)(in) = (R)-lactate(out) + H(+)(out). The catalysed reaction is glycolate(in) + H(+)(in) = glycolate(out) + H(+)(out). With respect to regulation, inhibited by the proton ionophore carbonyl cyanide m-chlorophenylhydrazone (CCCP). Its function is as follows. Uptake of L-lactate across the membrane. Can also transport D-lactate and glycolate. Seems to be driven by a proton motive force. The chain is L-lactate permease from Escherichia coli (strain K12).